A 400-amino-acid polypeptide reads, in one-letter code: Enoyl-[acyl-carrier-protein] reductase [NADH] (400 aa).

NAD(+)-binding positions include 48 to 53 (GASTGY), 74 to 75 (FE), 111 to 112 (DA), and 139 to 140 (LA). Tyrosine 225 provides a ligand contact to substrate. Tyrosine 235 (proton donor) is an active-site residue. NAD(+) contacts are provided by residues lysine 244 and 273 to 275 (VVT).

It belongs to the TER reductase family. Monomer.

It carries out the reaction a 2,3-saturated acyl-[ACP] + NAD(+) = a (2E)-enoyl-[ACP] + NADH + H(+). Its pathway is lipid metabolism; fatty acid biosynthesis. Involved in the final reduction of the elongation cycle of fatty acid synthesis (FAS II). Catalyzes the reduction of a carbon-carbon double bond in an enoyl moiety that is covalently linked to an acyl carrier protein (ACP). The sequence is that of Enoyl-[acyl-carrier-protein] reductase [NADH] from Burkholderia ambifaria (strain ATCC BAA-244 / DSM 16087 / CCUG 44356 / LMG 19182 / AMMD) (Burkholderia cepacia (strain AMMD)).